Consider the following 255-residue polypeptide: Small ribosomal subunit protein eS1A (255 aa).

The segment covering 1-18 has biased composition (basic residues); the sequence is MAVGKNKRLSKGKKGQKK. Residues 1–20 form a disordered region; sequence MAVGKNKRLSKGKKGQKKRV. Ala-2 is subject to N-acetylalanine; partial. Thr-245 carries the post-translational modification Phosphothreonine. Lys-248 participates in a covalent cross-link: Glycyl lysine isopeptide (Lys-Gly) (interchain with G-Cter in ubiquitin). A Phosphothreonine modification is found at Thr-254.

This sequence belongs to the eukaryotic ribosomal protein eS1 family. Component of the small ribosomal subunit. Mature ribosomes consist of a small (40S) and a large (60S) subunit. The 40S subunit contains about 33 different proteins and 1 molecule of RNA (18S). The 60S subunit contains about 49 different proteins and 3 molecules of RNA (25S, 5.8S and 5S).

It is found in the cytoplasm. This chain is Small ribosomal subunit protein eS1A, found in Saccharomyces cerevisiae (strain RM11-1a) (Baker's yeast).